Here is a 185-residue protein sequence, read N- to C-terminus: uncharacterized protein (185 aa).

Residues 1-69 lie on the Cytoplasmic side of the membrane; that stretch reads MSSFIDSIKS…SSDCSRAERT (69 aa). The helical transmembrane segment at 70 to 90 threads the bilayer; that stretch reads FNLILFAIVDLVICCESMAFF. Position 91 (N91) is a topological domain, extracellular. Residues 92–112 form a helical membrane-spanning segment; that stretch reads LLLKLPSMLLVSFLTMLVFSI. Topologically, residues 113–118 are cytoplasmic; it reads SYSWSA. The chain crosses the membrane as a helical span at residues 119-139; that stretch reads FNWISFAFSSASFLMKACILF. Topologically, residues 140–185 are extracellular; sequence NSSFTWFGVKAVIAEDMLYRMVRGLFCASFVKQLQTTFLATAIVLC.

The protein localises to the membrane. This is an uncharacterized protein from Saccharomyces cerevisiae (strain ATCC 204508 / S288c) (Baker's yeast).